Consider the following 195-residue polypeptide: Cyclin-dependent kinase inhibitor 7 (195 aa).

A compositionally biased stretch (basic and acidic residues) spans 1–11; it reads MSETKPKRDSE. Disordered stretches follow at residues 1–50, 61–80, and 117–154; these read MSET…SVSD, EEED…SSET, and SSEN…TQAE. Low complexity-rich tracts occupy residues 37–50 and 68–80; these read SSSS…SVSD and SSSI…SSET. A Phosphothreonine; by KIN10 modification is found at T151.

It belongs to the CDI family. ICK/KRP subfamily. As to quaternary structure, specifically interacts with CDKA-1, but not with CDKB1-1. Interacts with CYCD4-1. Binds to FBL17. Ubiquitinated by SCF(FBL17). Ubiquitination leads to its subsequent degradation, thus controlling cell cycle progression. In terms of tissue distribution, expressed in flowers, in developing pollen, and at lower levels in roots and leaves.

It is found in the nucleus. The protein resides in the nucleoplasm. In terms of biological role, binds and inhibits CYCD2-1/CDKA-1 complex kinase activity. May target specifically CDKA-1. The sequence is that of Cyclin-dependent kinase inhibitor 7 (KRP7) from Arabidopsis thaliana (Mouse-ear cress).